Reading from the N-terminus, the 125-residue chain is MRVLASHKHERTAQAIKEAVAAIISREVKDPRLGFVSVTKVDLARDLSQAKIYISVYGSEEDKKNSFIALNSAKGFIKGELASRVRLRIMPELYFVEDPSIEYGARIMEILEGLKKEAGENESES.

Belongs to the RbfA family. Monomer. Binds 30S ribosomal subunits, but not 50S ribosomal subunits or 70S ribosomes.

It is found in the cytoplasm. Functionally, one of several proteins that assist in the late maturation steps of the functional core of the 30S ribosomal subunit. Associates with free 30S ribosomal subunits (but not with 30S subunits that are part of 70S ribosomes or polysomes). Required for efficient processing of 16S rRNA. May interact with the 5'-terminal helix region of 16S rRNA. The chain is Ribosome-binding factor A from Carboxydothermus hydrogenoformans (strain ATCC BAA-161 / DSM 6008 / Z-2901).